A 210-amino-acid polypeptide reads, in one-letter code: uncharacterized protein (210 aa).

It to E.coli YkgK.

This is an uncharacterized protein from Escherichia coli (strain K12).